Consider the following 1775-residue polypeptide: Stereocilin (1775 aa).

Residues 1 to 22 (MALSLWPLLLLLLLLLLLSFAV) form the signal peptide. N-linked (GlcNAc...) asparagine glycans are attached at residues Asn-65, Asn-202, Asn-297, Asn-366, Asn-427, Asn-476, Asn-540, Asn-565, Asn-656, Asn-824, Asn-916, Asn-964, Asn-1179, and Asn-1274.

This sequence belongs to the stereocilin family.

The protein localises to the cell surface. Its subcellular location is the cell projection. It is found in the kinocilium. The protein resides in the stereocilium. Its function is as follows. Essential to the formation of horizontal top connectors between outer hair cell stereocilia. This chain is Stereocilin (STRC), found in Homo sapiens (Human).